The sequence spans 465 residues: MATAASAIEYSSVKSIAGPLLIVEGVEGAAYGEIVEVICPDGEKRMGQVLEAREGLAVVQVFEGTTGLSTKDTRVRFTGRTAKIGVSMEMLGRIFNGAGKPIDGGPEIVPEKELDINGYPLNPVSRKVPSDFIQTGISTIDGMNTLVRGQKLPIFSGSGLPHNQLAAQIARQAKVRGEGEKFAVVFAAMGITSEEANFFMEEFRKTGALERAVVFINLADDPAIERILTPRIALTVAEYLAYEKDMHVLVILTDMTNYCEALREISAARNEVPGRRGYPGYMYTDLATIYERAGRVKGRTGTITQIPILTMPDDDITHPIPDLTGYITEGQIVLSRELHRKGIYPPVDVLPSLSRLAGNGQGPGKTREDHKKVVNQAYAAYAEGRSLRDLVAVVGEEALTDRDRAYLKFADEFEDKFVRQGKDEDRSIEETLDLLWELLAILPEEELKRVDRELIEKYHPKYRKK.

The protein belongs to the ATPase alpha/beta chains family. The A-type ATPase is composed of subunits A(3), B(3), C, D, E(1 or 2), F, H(2), I and proteolipid K(x).

The protein resides in the cell membrane. Component of the A-type ATP synthase that produces ATP from ADP in the presence of a proton gradient across the membrane. The B chain is a regulatory subunit. This chain is A-type ATP synthase subunit B, found in Methanocaldococcus jannaschii (strain ATCC 43067 / DSM 2661 / JAL-1 / JCM 10045 / NBRC 100440) (Methanococcus jannaschii).